The sequence spans 597 residues: Cell division cycle protein 23 homolog (597 aa).

Ala-2 carries the N-acetylalanine modification. TPR repeat units follow at residues 27–63 (SDLR…FSLP), 73–112 (PPPI…CNSK), and 114–144 (AYFL…LEKG). Lys-147 is covalently cross-linked (Glycyl lysine isopeptide (Lys-Gly) (interchain with G-Cter in SUMO2)). TPR repeat units follow at residues 169–200 (GFGL…HVLP), 229–259 (MKEF…DVGF), 263–293 (SYIV…RKQD), 297–327 (IENM…CEID), 331–361 (VETC…LKLN), 366–395 (GAWT…IEVN), 400–432 (RAWY…RPND), and 433–466 (SRML…GDVE). Tyr-273 bears the Phosphotyrosine mark. Lys-467 bears the N6-acetyllysine mark. 2 TPR repeats span residues 468 to 500 (MALV…IYSC) and 504 to 540 (VEHL…CAFN). Residues Thr-562 and Thr-565 each carry the phosphothreonine modification. Ser-578 is modified (phosphoserine). Thr-582 is subject to Phosphothreonine. Ser-588 and Ser-593 each carry phosphoserine. Thr-596 is subject to Phosphothreonine.

The protein belongs to the APC8/CDC23 family. As to quaternary structure, the mammalian APC/C is composed at least of 14 distinct subunits ANAPC1, ANAPC2, CDC27/APC3, ANAPC4, ANAPC5, CDC16/APC6, ANAPC7, CDC23/APC8, ANAPC10, ANAPC11, CDC26/APC12, ANAPC13, ANAPC15 and ANAPC16 that assemble into a complex of at least 19 chains with a combined molecular mass of around 1.2 MDa; APC/C interacts with FZR1 and FBXO5. Interacts with FBXO43; the interaction is direct. Post-translationally, phosphorylated. Phosphorylation on Thr-562 occurs specifically during mitosis.

It functions in the pathway protein modification; protein ubiquitination. Functionally, component of the anaphase promoting complex/cyclosome (APC/C), a cell cycle-regulated E3 ubiquitin ligase that controls progression through mitosis and the G1 phase of the cell cycle. The APC/C complex acts by mediating ubiquitination and subsequent degradation of target proteins: it mainly mediates the formation of 'Lys-11'-linked polyubiquitin chains and, to a lower extent, the formation of 'Lys-48'- and 'Lys-63'-linked polyubiquitin chains. The APC/C complex catalyzes assembly of branched 'Lys-11'-/'Lys-48'-linked branched ubiquitin chains on target proteins. In Homo sapiens (Human), this protein is Cell division cycle protein 23 homolog (CDC23).